We begin with the raw amino-acid sequence, 174 residues long: Centrosomal protein 20 (174 aa).

The necessary and sufficient for homooligomerization and localization to centrosomes and pericentriolar satellites stretch occupies residues 1–104; the sequence is MATVTELKAV…AFEESKDNSI (104 aa). One can recognise a LisH domain in the interval 49-81; sequence ENLLINELIREYLEFNKYKYTASVLIAESGQPV. The interval 136-174 is disordered; sequence TKHLSWKPSRRPDDDHVRKDTGPRTTTEELPAAAQAVSR. The residue at position 144 (serine 144) is a Phosphoserine. Over residues 145-157 the composition is skewed to basic and acidic residues; sequence RRPDDDHVRKDTG.

Belongs to the CEP43 family. As to quaternary structure, homooligomer; probably required for localization to centrosomes. Forms a complex with KIAA0753/OFIP and OFD1; within this complex may stabilize the interaction between OFD1 and KIAA0753/OFIP. Interacts with PCM1; this interaction may be mediated by KIAA0753/OFIP.

It is found in the cytoplasm. The protein localises to the cytoskeleton. The protein resides in the microtubule organizing center. It localises to the centrosome. Its subcellular location is the centriole. It is found in the cell projection. The protein localises to the cilium. The protein resides in the cilium basal body. It localises to the cytoplasmic granule. Its subcellular location is the centriolar satellite. Functionally, involved in the biogenesis of cilia. Required for the recruitment of PLK1 to centrosomes and S phase progression. In Mus musculus (Mouse), this protein is Centrosomal protein 20.